The following is a 438-amino-acid chain: MTTVLPPLEDTDGLWAALTEAAASVEKLLATLPEHGARSSAERAEIAAAHDAARALRVRFLDTHADAVYDRLTDHRRVHLRLAELVEAAATAFPGLVPTQQQLAVERSLPQAAKEGHEIDQGIFLRAVLRSPLAGPHLLDAMLRPTPRALELLPEFVRTGEVEMEAVHLERRDGVARLTMCRDDRLNAEDGQQVDDMETAVDLALLDPGVRVGLLRGGVMSHPRYRGKRVFSAGINLKYLSQGGISLVDFLMRRELGYIHKLVRGVLTNDDRPGWWHSPRIEKPWVAAVDGFAIGGGAQLLLVFDRVLASSDAYFSLPAAKEGIIPGAANLRLGRFAGPRVSRQVILEGRRIWAKEPEARLLVDEVVEPDELDAAIERSLTRLDGDAVLANRRMLNLADESPDGFRAYMAEFALMQALRLYGHDVIDKVGRFGGRPPA.

Substrate-binding positions include Asp-183, Glu-189, His-222–Tyr-225, Ala-233–Lys-238, Gly-296, Ile-325–Gly-327, and Gln-416.

It belongs to the enoyl-CoA hydratase/isomerase family. Homohexamer; dimer of trimers.

It catalyses the reaction (3,5-dihydroxyphenyl)acetyl-CoA + O2 = 2-(3,5-dihydroxyphenyl)-2-oxoacetate + CoA + H(+). Inhibited by DPA-S-(N-acetylcysteamine). Its function is as follows. Involved in the biosynthesis of the nonproteinogenic amino acid monomer (S)-3,5-dihydroxyphenylglycine (Dpg) responsible of the production of vancomycin and teicoplanin antibiotics. Catalyzes the unusual conversion 3,5-dihydroxyphenylacetyl-CoA (DPA-CoA) to 3,5-dihydroxyphenylglyoxylate. DpgC performed a net four-electron oxidation of the benzylic carbon of DPA-CoA and the hydrolysis of the thioester bond to generate free CoA. DpgC has the ability to process a diverse range of substituted phenylacetyl-CoA substrates. This Streptomyces toyocaensis protein is (3,5-dihydroxyphenyl)acetyl-CoA 1,2-dioxygenase.